Here is a 179-residue protein sequence, read N- to C-terminus: Replication restart protein DnaT (179 aa).

A disordered region spans residues glycine 156–glycine 179.

Belongs to the DnaT family. As to quaternary structure, homooligomerizes. Interacts with PriB. Component of the replication restart primosome. Primosome assembly occurs via a 'hand-off' mechanism. PriA binds to replication forks, subsequently PriB then DnaT bind; DnaT then displaces ssDNA to generate the helicase loading substrate.

In terms of biological role, involved in the restart of stalled replication forks, which reloads the replicative helicase on sites other than the origin of replication. Can function in multiple replication restart pathways. Displaces ssDNA from a PriB-ssDNA complex. Probably forms a spiral filament on ssDNA. The polypeptide is Replication restart protein DnaT (Escherichia coli O157:H7).